The sequence spans 327 residues: Aspartate carbamoyltransferase catalytic subunit (327 aa).

Residues arginine 67 and threonine 68 each contribute to the carbamoyl phosphate site. Position 95 (lysine 95) interacts with L-aspartate. Residues arginine 117, histidine 145, and glutamine 148 each coordinate carbamoyl phosphate. Residues arginine 178 and arginine 232 each contribute to the L-aspartate site. 2 residues coordinate carbamoyl phosphate: glycine 273 and proline 274.

The protein belongs to the aspartate/ornithine carbamoyltransferase superfamily. ATCase family. Heterododecamer (2C3:3R2) of six catalytic PyrB chains organized as two trimers (C3), and six regulatory PyrI chains organized as three dimers (R2).

The enzyme catalyses carbamoyl phosphate + L-aspartate = N-carbamoyl-L-aspartate + phosphate + H(+). The protein operates within pyrimidine metabolism; UMP biosynthesis via de novo pathway; (S)-dihydroorotate from bicarbonate: step 2/3. Its function is as follows. Catalyzes the condensation of carbamoyl phosphate and aspartate to form carbamoyl aspartate and inorganic phosphate, the committed step in the de novo pyrimidine nucleotide biosynthesis pathway. This Parvibaculum lavamentivorans (strain DS-1 / DSM 13023 / NCIMB 13966) protein is Aspartate carbamoyltransferase catalytic subunit.